A 463-amino-acid chain; its full sequence is L-seryl-tRNA(Sec) selenium transferase (463 aa).

N6-(pyridoxal phosphate)lysine is present on K295.

Belongs to the SelA family. As to quaternary structure, homodecamer; pentamer of dimers. Binds only one seryl-tRNA(Sec) per dimer. Pyridoxal 5'-phosphate serves as cofactor.

The protein localises to the cytoplasm. It carries out the reaction L-seryl-tRNA(Sec) + selenophosphate + H(+) = L-selenocysteinyl-tRNA(Sec) + phosphate. The protein operates within aminoacyl-tRNA biosynthesis; selenocysteinyl-tRNA(Sec) biosynthesis; selenocysteinyl-tRNA(Sec) from L-seryl-tRNA(Sec) (bacterial route): step 1/1. Converts seryl-tRNA(Sec) to selenocysteinyl-tRNA(Sec) required for selenoprotein biosynthesis. In Salmonella paratyphi B (strain ATCC BAA-1250 / SPB7), this protein is L-seryl-tRNA(Sec) selenium transferase.